We begin with the raw amino-acid sequence, 413 residues long: uncharacterized protein (413 aa).

An N-terminal signal peptide occupies residues 1-20; the sequence is MRVIIVIMMVVFVVVGTSSG.

This is an uncharacterized protein from Archaeoglobus fulgidus (strain ATCC 49558 / DSM 4304 / JCM 9628 / NBRC 100126 / VC-16).